The following is a 547-amino-acid chain: MAAKDVKFGGDARQRMLRGVDILADAVKVTLGPKGRNVVLDKSFGAPRITKDGVSVAKEIELADKFENMGAQMVREVASKTNDVAGDGTTTATVLAQAIVREGAKAVAAGMNPMDLKRGIDKAVIAVVEELKKNTKKITTPAETAQVGTISANGEHEIGEMISQAMQKVGSEGVITVEEAKGLHTELDVVEGMQFDRGYISPYFITNAEKMVADLDNPYILIHEKKLSSLQPMLPLLESVVQSGRPLLIIAEDVDGEALATLVVNKLRGGLKIAAVKAPGFGDRRKAMLEDIAILTGGQVISEDLGIKLETVTLAMLGRAKKVRIEKENTTIVEGAGASDDIKGRCGQIRAQIEETTSDYDREKLQERLAKLAGGVAVIRVGGSTEVEVKERKDRVDDALHATRAAVEEGIVPGGGTALARASTALGNLHFHNDDQRVGAEIIRKALQAPLRQIAHNAGEDGAVIAGKVLESNDYNYGFDAQIGDYKDLVAAGIIDPTKVVRTALQDASSVAGLLITTEAMVAEKPEKKAPAMPAGGGMGGMGDMDF.

Residues 30-33 (TLGP), Lys51, 87-91 (DGTTT), Gly415, and Asp496 contribute to the ATP site.

It belongs to the chaperonin (HSP60) family. As to quaternary structure, forms a cylinder of 14 subunits composed of two heptameric rings stacked back-to-back. Interacts with the co-chaperonin GroES.

It localises to the cytoplasm. The catalysed reaction is ATP + H2O + a folded polypeptide = ADP + phosphate + an unfolded polypeptide.. In terms of biological role, together with its co-chaperonin GroES, plays an essential role in assisting protein folding. The GroEL-GroES system forms a nano-cage that allows encapsulation of the non-native substrate proteins and provides a physical environment optimized to promote and accelerate protein folding. The polypeptide is Chaperonin GroEL 1 (Gluconacetobacter diazotrophicus (strain ATCC 49037 / DSM 5601 / CCUG 37298 / CIP 103539 / LMG 7603 / PAl5)).